An 864-amino-acid chain; its full sequence is MPDISLKVLSNEIKISIQELIKELSIIGITKTEDNYINVLEKNILLKHLESKKKYSLDTLVLQRKTRSTLRISTVGGKNKSVQVEVRKKRAYVKNNKFENESFLNEKKVIKHSMQKTSSLKNKEKKYIKNIEKIELNKSDSRSLNTKKENKLKISNKDEQNKKFNQHRESNSFDLNHKKRIKENKDIRISHKEEKQDYHLTTFLHARQAEDENDREVEIDKRNHGRILKNYRQKKNNKNFHNGRYNKEEIRTFNRNKKNSKQKNKPILLQQVFQKPESIINRDVIISNTITVSDLANKMAIKSSEVIKNMMNMGIIGTINHVLDQDTAQLIAEEMGHKVIVHRENALEELIMKDRDTGNDVSAIRAPVVTIMGHVDHGKTSLLDYIRSTKTAFYEAGGITQNIGAYHVKTDLGSITFLDTPGHSAFTAMRSRGVQITDIVILVVAADDGVMPQTIEAIQHAKEANVPVIVAINKIDKTDSDIDKVRNDLMKYNILSEEWGGENIFVSVSAKTGKGINKLLNVILLQAEMLELKAVTTGMAEGIVVESFLDKGRGPIATVLVKKGQLKKGDVILCGFEYGRIKSLRDASGNEVFSAGPSIPVEVLGLSKVPFSGDVVTVVRDEKKAREVASYRKEKSREKKLSNQNRINLENMFDDINKNNVSELKIILKSDVQGSLEAISGALLKLSTEEVKIKIIGLGIGGITETDASLALASNAIILGFNVRADTSAKKIINSEHLDLRYYSVIYDLLDEVKAAMTGLLSPEYKENIIGLAEVRNTFKSPKFGLIAGCMVTEGVIKRSNPIHILRNNIVIYEGELESLRRFKEDVNEIRNGLECGIGIKNYNDIRVGDIIEVFEVREMKRIL.

Residues D140–N171 are compositionally biased toward basic and acidic residues. The segment at D140–K179 is disordered. The tr-type G domain maps to I364–K533. Residues G373–T380 are G1. GTP is bound at residue G373–T380. The segment at G398–N402 is G2. A G3 region spans residues D419–G422. Residues D419–H423 and N473–D476 each bind GTP. The tract at residues N473–D476 is G4. Residues S509–K511 are G5.

It belongs to the TRAFAC class translation factor GTPase superfamily. Classic translation factor GTPase family. IF-2 subfamily.

Its subcellular location is the cytoplasm. One of the essential components for the initiation of protein synthesis. Protects formylmethionyl-tRNA from spontaneous hydrolysis and promotes its binding to the 30S ribosomal subunits. Also involved in the hydrolysis of GTP during the formation of the 70S ribosomal complex. This chain is Translation initiation factor IF-2, found in Buchnera aphidicola subsp. Acyrthosiphon pisum (strain Tuc7).